We begin with the raw amino-acid sequence, 51 residues long: uncharacterized protein (51 aa).

Residues 10–29 (LFLYHPLFLLLLYIYLVLFI) traverse the membrane as a helical segment.

It localises to the plastid. Its subcellular location is the chloroplast membrane. This is an uncharacterized protein from Anthoceros angustus (Hornwort).